Here is a 210-residue protein sequence, read N- to C-terminus: Leucyl/phenylalanyl-tRNA--protein transferase (210 aa).

This sequence belongs to the L/F-transferase family.

It is found in the cytoplasm. The enzyme catalyses N-terminal L-lysyl-[protein] + L-leucyl-tRNA(Leu) = N-terminal L-leucyl-L-lysyl-[protein] + tRNA(Leu) + H(+). It carries out the reaction N-terminal L-arginyl-[protein] + L-leucyl-tRNA(Leu) = N-terminal L-leucyl-L-arginyl-[protein] + tRNA(Leu) + H(+). It catalyses the reaction L-phenylalanyl-tRNA(Phe) + an N-terminal L-alpha-aminoacyl-[protein] = an N-terminal L-phenylalanyl-L-alpha-aminoacyl-[protein] + tRNA(Phe). Its function is as follows. Functions in the N-end rule pathway of protein degradation where it conjugates Leu, Phe and, less efficiently, Met from aminoacyl-tRNAs to the N-termini of proteins containing an N-terminal arginine or lysine. This Roseobacter denitrificans (strain ATCC 33942 / OCh 114) (Erythrobacter sp. (strain OCh 114)) protein is Leucyl/phenylalanyl-tRNA--protein transferase.